The primary structure comprises 327 residues: DNA-directed RNA polymerase subunit alpha (327 aa).

The alpha N-terminal domain (alpha-NTD) stretch occupies residues 1–233 (MQGSVTEFLK…EQLEAFVDLR (233 aa)). The tract at residues 247–327 (FDPVLLRPVD…NWPPLGFIDK (81 aa)) is alpha C-terminal domain (alpha-CTD).

Belongs to the RNA polymerase alpha chain family. In terms of assembly, homodimer. The RNAP catalytic core consists of 2 alpha, 1 beta, 1 beta' and 1 omega subunit. When a sigma factor is associated with the core the holoenzyme is formed, which can initiate transcription.

The catalysed reaction is RNA(n) + a ribonucleoside 5'-triphosphate = RNA(n+1) + diphosphate. Functionally, DNA-dependent RNA polymerase catalyzes the transcription of DNA into RNA using the four ribonucleoside triphosphates as substrates. The chain is DNA-directed RNA polymerase subunit alpha from Baumannia cicadellinicola subsp. Homalodisca coagulata.